Reading from the N-terminus, the 88-residue chain is Small cysteine-rich outer membrane protein OmcA (88 aa).

An N-terminal signal peptide occupies residues 1–18; it reads MKKTALLAALCSVVSLSS. The N-palmitoyl cysteine moiety is linked to residue cysteine 19. Residue cysteine 19 is the site of S-diacylglycerol cysteine attachment.

Part of a disulfide cross-linked outer membrane complex (COMC) composed of the major outer membrane porin (MOMP), the small cysteine-rich protein (OmcA) and the large cysteine-rich periplasmic protein (OmcB).

Its subcellular location is the cell outer membrane. In terms of biological role, in elementary bodies (EBs, the infectious stage, which is able to survive outside the host cell) provides the structural integrity of the outer envelope through disulfide cross-links with the large cysteine-rich periplasmic protein and the major outer membrane porin. It has been described in publications as the Sarkosyl-insoluble COMC (Chlamydia outer membrane complex), and serves as the functional equivalent of peptidoglycan. This Chlamydia muridarum (strain MoPn / Nigg) protein is Small cysteine-rich outer membrane protein OmcA (omcA).